The primary structure comprises 161 residues: Cyclic pyranopterin monophosphate synthase (161 aa).

Substrate contacts are provided by residues 75–77 and 113–114; these read LCH and ME. Residue D128 is part of the active site.

The protein belongs to the MoaC family. Homohexamer; trimer of dimers.

It carries out the reaction (8S)-3',8-cyclo-7,8-dihydroguanosine 5'-triphosphate = cyclic pyranopterin phosphate + diphosphate. It functions in the pathway cofactor biosynthesis; molybdopterin biosynthesis. In terms of biological role, catalyzes the conversion of (8S)-3',8-cyclo-7,8-dihydroguanosine 5'-triphosphate to cyclic pyranopterin monophosphate (cPMP). The protein is Cyclic pyranopterin monophosphate synthase of Escherichia coli O9:H4 (strain HS).